Here is a 657-residue protein sequence, read N- to C-terminus: tRNA 5-methylaminomethyl-2-thiouridine biosynthesis bifunctional protein MnmC (657 aa).

Residues Met1–Gln235 are tRNA (mnm(5)s(2)U34)-methyltransferase. The FAD-dependent cmnm(5)s(2)U34 oxidoreductase stretch occupies residues Ile261–Thr657.

This sequence in the N-terminal section; belongs to the methyltransferase superfamily. tRNA (mnm(5)s(2)U34)-methyltransferase family. The protein in the C-terminal section; belongs to the DAO family. It depends on FAD as a cofactor.

The protein resides in the cytoplasm. The enzyme catalyses 5-aminomethyl-2-thiouridine(34) in tRNA + S-adenosyl-L-methionine = 5-methylaminomethyl-2-thiouridine(34) in tRNA + S-adenosyl-L-homocysteine + H(+). Its function is as follows. Catalyzes the last two steps in the biosynthesis of 5-methylaminomethyl-2-thiouridine (mnm(5)s(2)U) at the wobble position (U34) in tRNA. Catalyzes the FAD-dependent demodification of cmnm(5)s(2)U34 to nm(5)s(2)U34, followed by the transfer of a methyl group from S-adenosyl-L-methionine to nm(5)s(2)U34, to form mnm(5)s(2)U34. This Ectopseudomonas mendocina (strain ymp) (Pseudomonas mendocina) protein is tRNA 5-methylaminomethyl-2-thiouridine biosynthesis bifunctional protein MnmC.